The sequence spans 197 residues: Cytochrome c-L (197 aa).

Residues 1-25 (MMNRVKIGTALLGLTLAGIALPALA) form the signal peptide. Residues Cys-90, Cys-93, and His-94 each contribute to the heme c site.

Post-translationally, binds 1 heme c group covalently per subunit.

It localises to the periplasm. Electron acceptor for MDH. Acts in methanol oxidation. This chain is Cytochrome c-L (moxG), found in Methylorubrum extorquens (strain ATCC 14718 / DSM 1338 / JCM 2805 / NCIMB 9133 / AM1) (Methylobacterium extorquens).